Consider the following 273-residue polypeptide: DnaJ homolog subfamily C member 27 (273 aa).

GTP contacts are provided by residues 23–30, 71–75, and 134–137; these read GNAEVGKS, DMAGH, and NKVD. The region spanning 217–273 is the J domain; that stretch reads DSWDMLGVKPGATREEVNKAYRKLAVLLHPDKCVAPGSEDAFKAVVNARTSLLKNIK.

This sequence belongs to the small GTPase superfamily. Rab family.

It localises to the nucleus. Its function is as follows. GTPase possibly involved in regulation of the MEK/ERK pathway. In Danio rerio (Zebrafish), this protein is DnaJ homolog subfamily C member 27 (dnajc27).